The chain runs to 179 residues: Putative mediator of RNA polymerase II transcription subunit 28 (179 aa).

A coiled-coil region spans residues 81 to 119 (SAEKNKIQLKQEIYKVKKEIENKDRLIERYKNKVKEWKY).

The protein belongs to the Mediator complex subunit 28 family. As to quaternary structure, component of the Mediator complex.

It is found in the nucleus. Component of the Mediator complex, a coactivator involved in the regulated transcription of nearly all RNA polymerase II-dependent genes. Mediator functions as a bridge to convey information from gene-specific regulatory proteins to the basal RNA polymerase II transcription machinery. Mediator is recruited to promoters by direct interactions with regulatory proteins and serves as a scaffold for the assembly of a functional preinitiation complex with RNA polymerase II and the general transcription factors. The sequence is that of Putative mediator of RNA polymerase II transcription subunit 28 (med28) from Dictyostelium discoideum (Social amoeba).